We begin with the raw amino-acid sequence, 391 residues long: Chalcone synthase (391 aa).

The active site involves Cys-164.

Belongs to the thiolase-like superfamily. Chalcone/stilbene synthases family.

It catalyses the reaction (E)-4-coumaroyl-CoA + 3 malonyl-CoA + 3 H(+) = 2',4,4',6'-tetrahydroxychalcone + 3 CO2 + 4 CoA. The protein operates within secondary metabolite biosynthesis; flavonoid biosynthesis. In terms of biological role, the primary product of this enzyme is 4,2',4',6'-tetrahydroxychalcone (also termed naringenin-chalcone or chalcone) which can under specific conditions spontaneously isomerize into naringenin. This chain is Chalcone synthase (CHS), found in Dianthus caryophyllus (Carnation).